A 644-amino-acid polypeptide reads, in one-letter code: DNA gyrase subunit B (644 aa).

The 115-residue stretch at 429–543 (CEIFLVEGDS…AGYVYIAQPP (115 aa)) folds into the Toprim domain. Mg(2+) contacts are provided by glutamate 435, aspartate 508, and aspartate 510.

Belongs to the type II topoisomerase GyrB family. As to quaternary structure, heterotetramer, composed of two GyrA and two GyrB chains. In the heterotetramer, GyrA contains the active site tyrosine that forms a transient covalent intermediate with DNA, while GyrB binds cofactors and catalyzes ATP hydrolysis. The cofactor is Mg(2+). Mn(2+) serves as cofactor. Ca(2+) is required as a cofactor.

The protein localises to the cytoplasm. The catalysed reaction is ATP-dependent breakage, passage and rejoining of double-stranded DNA.. Its function is as follows. A type II topoisomerase that negatively supercoils closed circular double-stranded (ds) DNA in an ATP-dependent manner to modulate DNA topology and maintain chromosomes in an underwound state. Negative supercoiling favors strand separation, and DNA replication, transcription, recombination and repair, all of which involve strand separation. Also able to catalyze the interconversion of other topological isomers of dsDNA rings, including catenanes and knotted rings. Type II topoisomerases break and join 2 DNA strands simultaneously in an ATP-dependent manner. In Staphylococcus aureus (strain Mu50 / ATCC 700699), this protein is DNA gyrase subunit B.